An 881-amino-acid polypeptide reads, in one-letter code: Alanine--tRNA ligase (881 aa).

Zn(2+) is bound by residues His566, His570, Cys668, and His672.

This sequence belongs to the class-II aminoacyl-tRNA synthetase family. It depends on Zn(2+) as a cofactor.

It is found in the cytoplasm. The catalysed reaction is tRNA(Ala) + L-alanine + ATP = L-alanyl-tRNA(Ala) + AMP + diphosphate. In terms of biological role, catalyzes the attachment of alanine to tRNA(Ala) in a two-step reaction: alanine is first activated by ATP to form Ala-AMP and then transferred to the acceptor end of tRNA(Ala). Also edits incorrectly charged Ser-tRNA(Ala) and Gly-tRNA(Ala) via its editing domain. In Frankia casuarinae (strain DSM 45818 / CECT 9043 / HFP020203 / CcI3), this protein is Alanine--tRNA ligase.